A 313-amino-acid chain; its full sequence is Pyrimidine-specific ribonucleoside hydrolase RihB (313 aa).

The Proton acceptor role is filled by Asp-11. Ca(2+) is bound by residues Asp-11, Asp-16, and Val-124. The substrate site is built by Gln-227 and His-239. Asp-240 is a binding site for Ca(2+).

The protein belongs to the IUNH family. RihB subfamily. As to quaternary structure, homotetramer. The cofactor is Ca(2+).

The enzyme catalyses a pyrimidine ribonucleoside + H2O = a pyrimidine nucleobase + D-ribose. Functionally, hydrolyzes cytidine or uridine to ribose and cytosine or uracil, respectively. Has a clear preference for cytidine over uridine. Strictly specific for ribonucleosides. The sequence is that of Pyrimidine-specific ribonucleoside hydrolase RihB from Escherichia coli O1:K1 / APEC.